Reading from the N-terminus, the 132-residue chain is Small ribosomal subunit protein uS8 (132 aa).

Belongs to the universal ribosomal protein uS8 family. In terms of assembly, part of the 30S ribosomal subunit. Contacts proteins S5 and S12.

One of the primary rRNA binding proteins, it binds directly to 16S rRNA central domain where it helps coordinate assembly of the platform of the 30S subunit. In Rhodococcus jostii (strain RHA1), this protein is Small ribosomal subunit protein uS8.